Here is a 425-residue protein sequence, read N- to C-terminus: MLDLKRIRTDFDTVAAKLKNRGVSEDTLTHLKELDEKRRTLLVQSEELKAERNIASAAIAQAKRQKEDATQQIADMQKVSADIKTIDNQLVAIDQQVADIITVLPNTPHDSVPVGADEEDNVEIRRWGTPRDFDFEVKAHWDLGEDLDILDWERGAKVTGARFLFYKNLGARLERALYNFMLDEHIKEGYQEIITPYMVNHDSMFGTGQYPKFKEDTFELADTNFVLIPTAEVPLTNYYRGEILDGKELPIYFTAMSPSFRSEAGSAGRDTRGLIRLHQFHKVEMVKFAKSEESYQELEKMTANAENILQKLGLPYRVISLCTGDMGFSAAKTYDLEVWIPAQNTYREISSCSNTEDFQARRAQIRYRDEADGKVKLLHTLNGSGLAVGRTVAAILENYQNEDGSVTIPEVLRPYMGGETVISPK.

Thr-230–Glu-232 is an L-serine binding site. Arg-261–Glu-263 contributes to the ATP binding site. Glu-284 contributes to the L-serine binding site. An ATP-binding site is contributed by Glu-348–Ser-351. Ser-384 lines the L-serine pocket.

Belongs to the class-II aminoacyl-tRNA synthetase family. Type-1 seryl-tRNA synthetase subfamily. In terms of assembly, homodimer. The tRNA molecule binds across the dimer.

It localises to the cytoplasm. It catalyses the reaction tRNA(Ser) + L-serine + ATP = L-seryl-tRNA(Ser) + AMP + diphosphate + H(+). The enzyme catalyses tRNA(Sec) + L-serine + ATP = L-seryl-tRNA(Sec) + AMP + diphosphate + H(+). The protein operates within aminoacyl-tRNA biosynthesis; selenocysteinyl-tRNA(Sec) biosynthesis; L-seryl-tRNA(Sec) from L-serine and tRNA(Sec): step 1/1. Its function is as follows. Catalyzes the attachment of serine to tRNA(Ser). Is also able to aminoacylate tRNA(Sec) with serine, to form the misacylated tRNA L-seryl-tRNA(Sec), which will be further converted into selenocysteinyl-tRNA(Sec). This is Serine--tRNA ligase from Streptococcus pyogenes serotype M5 (strain Manfredo).